The primary structure comprises 217 residues: MPCALEHIHTRYLGEQPYEPTWTAMRTFTEERSSETRDELWLLQHPPVYTLGQAGRPEHILDTGETPVVHTDRGGQVTWHGPGQLVAYPLLDLRRWGLGVRTLVHALEQSVVSLLAAYGVPSHRREDAPGVYVDGAKVAALGIRVRRGCSYHGLSLNVCNDPAPFERIHPCGYAGLTTTRVHDLGITTPLDRLEVELGIYLLQAIDAASRASRHDRA.

One can recognise a BPL/LPL catalytic domain in the interval 34 to 216 (SETRDELWLL…AASRASRHDR (183 aa)). Residues 73–80 (RGGQVTWH), 140–142 (ALG), and 153–155 (GLS) each bind substrate. Cys-171 acts as the Acyl-thioester intermediate in catalysis.

It belongs to the LipB family.

The protein localises to the cytoplasm. The catalysed reaction is octanoyl-[ACP] + L-lysyl-[protein] = N(6)-octanoyl-L-lysyl-[protein] + holo-[ACP] + H(+). It participates in protein modification; protein lipoylation via endogenous pathway; protein N(6)-(lipoyl)lysine from octanoyl-[acyl-carrier-protein]: step 1/2. In terms of biological role, catalyzes the transfer of endogenously produced octanoic acid from octanoyl-acyl-carrier-protein onto the lipoyl domains of lipoate-dependent enzymes. Lipoyl-ACP can also act as a substrate although octanoyl-ACP is likely to be the physiological substrate. This chain is Octanoyltransferase, found in Halorhodospira halophila (strain DSM 244 / SL1) (Ectothiorhodospira halophila (strain DSM 244 / SL1)).